The primary structure comprises 104 residues: Large ribosomal subunit protein uL24 (104 aa).

Belongs to the universal ribosomal protein uL24 family. Part of the 50S ribosomal subunit.

Functionally, one of two assembly initiator proteins, it binds directly to the 5'-end of the 23S rRNA, where it nucleates assembly of the 50S subunit. In terms of biological role, one of the proteins that surrounds the polypeptide exit tunnel on the outside of the subunit. The chain is Large ribosomal subunit protein uL24 from Chelativorans sp. (strain BNC1).